We begin with the raw amino-acid sequence, 166 residues long: Large ribosomal subunit protein uL10 (166 aa).

Belongs to the universal ribosomal protein uL10 family. As to quaternary structure, part of the ribosomal stalk of the 50S ribosomal subunit. The N-terminus interacts with L11 and the large rRNA to form the base of the stalk. The C-terminus forms an elongated spine to which L12 dimers bind in a sequential fashion forming a multimeric L10(L12)X complex.

Functionally, forms part of the ribosomal stalk, playing a central role in the interaction of the ribosome with GTP-bound translation factors. The protein is Large ribosomal subunit protein uL10 of Streptococcus gordonii (strain Challis / ATCC 35105 / BCRC 15272 / CH1 / DL1 / V288).